The following is a 506-amino-acid chain: MASQQAPAKDLQTNNLEFTPTDSSGVQWAEDISNSPSAQLNFSPSNNGCWATQELQSLWKMFNSWLQPEKQTKEQMISQLVLEQFLLTGHCKDKYALTEKWKASGSDMRRFMESLTDECLKPPVMVHVSMQGQEALFSENMPLKEVIKLLKQQQSATRPTPDNEQMPVDTTQDRLLATGQENSENECNNSCNATEANVGESCSGNEMDSLLIMQKEQHPEHEEGNVVCQFPHGARRASQGTPSHHVDFPSAPTTADVPMEEQPKDLSRENISEDKNNCYNTSRNAATQVYSGDNIPRNKSDSLFINKRIYHPEPEVGDIPYGVPQDSTRASQGTSTCLQESLGECFSEKDPREVPGLQSRQEQLISDPVLLGKNHEANLPCESHQKRFCRDAKLYKCEECSRMFKHARSLSSHQRTHLNKKSELLCVTCQKMFKRVSDRRTHEIIHMPEKPFKCSTCEKSFSHKTNLKSHEMIHTGEMPYVCSLCSRRFRQSSTYHRHLRNYHRSD.

The segment at 1 to 24 (MASQQAPAKDLQTNNLEFTPTDSS) is disordered. An SCAN box domain is found at 37-119 (SAQLNFSPSN…RFMESLTDEC (83 aa)). C2H2-type zinc fingers lie at residues 395–417 (YKCE…QRTH), 424–446 (LLCV…EIIH), 452–474 (FKCS…EMIH), and 480–503 (YVCS…RNYH).

Up-regulated in blastocyst outgrowths and is detectable in a mosaic fashion in ES cultures.

It localises to the nucleus. The protein resides in the chromosome. Its subcellular location is the telomere. Its function is as follows. Transcription factor required to regulate early development. Binds telomeres and plays a key role in genomic stability by regulating telomere elongation. Acts as an activator of spontaneous telomere sister chromatid exchange (T-SCE) and telomere elongation. The chain is Zinc finger and SCAN domain containing protein 4F (Zscan4f) from Mus musculus (Mouse).